Here is a 42-residue protein sequence, read N- to C-terminus: F420-non-reducing hydrogenase vhu subunit U (42 aa).

The Ni(2+) site is built by Sec21 and Cys24. A non-standard amino acid (selenocysteine) is located at residue Sec21. Residues 28 to 42 constitute a propeptide, removed in mature form; that stretch reads VLDRVKFRIERKDED.

This sequence belongs to the [NiFe]/[NiFeSe] hydrogenase large subunit family. As to quaternary structure, the F420-non-reducing hydrogenase vhu is composed of four subunits; VhuA, VhuD, VhuG and VhuU. Requires Ni(2+) as cofactor.

The polypeptide is F420-non-reducing hydrogenase vhu subunit U (vhuU) (Methanopyrus kandleri (strain AV19 / DSM 6324 / JCM 9639 / NBRC 100938)).